The chain runs to 675 residues: DNA ligase (675 aa).

NAD(+) contacts are provided by residues 34–38 (DAEYD), 83–84 (SL), and E116. K118 acts as the N6-AMP-lysine intermediate in catalysis. NAD(+) contacts are provided by R139, E176, K293, and K317. Residues C411, C414, C429, and C435 each contribute to the Zn(2+) site. In terms of domain architecture, BRCT spans 594–675 (AGENPFKGKT…FLAIVNAYKR (82 aa)).

It belongs to the NAD-dependent DNA ligase family. LigA subfamily. The cofactor is Mg(2+). Mn(2+) is required as a cofactor.

It catalyses the reaction NAD(+) + (deoxyribonucleotide)n-3'-hydroxyl + 5'-phospho-(deoxyribonucleotide)m = (deoxyribonucleotide)n+m + AMP + beta-nicotinamide D-nucleotide.. DNA ligase that catalyzes the formation of phosphodiester linkages between 5'-phosphoryl and 3'-hydroxyl groups in double-stranded DNA using NAD as a coenzyme and as the energy source for the reaction. It is essential for DNA replication and repair of damaged DNA. The polypeptide is DNA ligase (Mannheimia succiniciproducens (strain KCTC 0769BP / MBEL55E)).